Consider the following 107-residue polypeptide: MVNSQILILFILSLTITIVMCQTFTYSHGWTNGKRSTSLEELANRNAIQSDNVFANCELQKLRLLLQGNINNQLFQTPCELLNFPKRSFSENMINDHRQPAPTNNNY.

The signal sequence occupies residues 1–21 (MVNSQILILFILSLTITIVMC). Gln-22 bears the Pyrrolidone carboxylic acid mark. Asn-32 is subject to Asparagine amide. The propeptide occupies 88–107 (SFSENMINDHRQPAPTNNNY).

It belongs to the corazonin family. In terms of tissue distribution, in the adult brain, expressed in four neurons of the lateral protocerebrum project axons towards the retrocerebral complex.

Its subcellular location is the secreted. Its function is as follows. Cardioactive peptide. Corazonin is probably involved in the physiological regulation of the heart beat. The polypeptide is Pro-corazonin (Apis mellifera (Honeybee)).